We begin with the raw amino-acid sequence, 339 residues long: MKVESVTKEDTKKSERKIKIAIAKPEDYSNKNVILEKEEELICPVCGSKSIIKDYERAEIVCEMCGCVLQQNLFDVGPEWRAFDHEQRVKRSRVGAPMTYTIHDKGLSTVIDWRNKDSYGKDISADKRAQLYRLRKWQRRIRVSDASERNLAFALSELDRIASKLGLPRNVRENAAVLYRGAVEKGLIRGRSIEGVAAAALYAACRRCKVPRTLDEIAEVSRVDRKEIGRTYRFISRELNIRLAPTNPVDYVPRFASELKLPGEVESKAISILQKAGERGLTSGRGPTGVAAAAIYIASVLQGTRRTQREVADVAGVTEVTIRNRYKELTEHLDIDVTL.

The TFIIB-type zinc-finger motif lies at 39-70 (EELICPVCGSKSIIKDYERAEIVCEMCGCVLQ). Positions 43, 46, 62, and 65 each coordinate Zn(2+). 2 consecutive repeat copies span residues 156–239 (SELD…SREL) and 250–331 (DYVP…ELTE).

Belongs to the TFIIB family.

Stabilizes TBP binding to an archaeal box-A promoter. Also responsible for recruiting RNA polymerase II to the pre-initiation complex (DNA-TBP-TFIIB). The chain is Transcription initiation factor IIB from Methanococcus maripaludis (strain DSM 14266 / JCM 13030 / NBRC 101832 / S2 / LL).